Reading from the N-terminus, the 58-residue chain is Alpha-conotoxin-like Pu1.6 (58 aa).

The signal sequence occupies residues 1 to 17 (MFTVFLLVVLVTTVVFS). The propeptide occupies 18-35 (TSDHRPASNHENRRASKR). Intrachain disulfides connect cysteine 44–cysteine 50 and cysteine 45–cysteine 58. Residues 46–48 (TNP) form a lacks the Ser-Xaa-Pro motif that is crucial for potent interaction with nAChR region.

Belongs to the conotoxin A superfamily. As to expression, expressed by the venom duct.

It is found in the secreted. Its function is as follows. Alpha-conotoxins act on postsynaptic membranes, they bind to the nicotinic acetylcholine receptors (nAChR) and thus inhibit them. Has possibly a distinct nAChR binding mode from other alpha-conotoxins, due to a different three residue motif (lacks the Ser-Xaa-Pro motif). The protein is Alpha-conotoxin-like Pu1.6 of Conus pulicarius (Flea-bitten cone).